The chain runs to 133 residues: Small ribosomal subunit protein uS8 (133 aa).

It belongs to the universal ribosomal protein uS8 family. Part of the 30S ribosomal subunit.

In terms of biological role, one of the primary rRNA binding proteins, it binds directly to 16S rRNA central domain where it helps coordinate assembly of the platform of the 30S subunit. This chain is Small ribosomal subunit protein uS8, found in Hyperthermus butylicus (strain DSM 5456 / JCM 9403 / PLM1-5).